A 131-amino-acid chain; its full sequence is uncharacterized protein (131 aa).

A helical membrane pass occupies residues V17–L39.

It localises to the membrane. This is an uncharacterized protein from Archaeoglobus fulgidus (strain ATCC 49558 / DSM 4304 / JCM 9628 / NBRC 100126 / VC-16).